The chain runs to 293 residues: Bifunctional protein FolD (293 aa).

Residues 165–167 (GRS), serine 190, and isoleucine 231 each bind NADP(+).

Belongs to the tetrahydrofolate dehydrogenase/cyclohydrolase family. Homodimer.

It carries out the reaction (6R)-5,10-methylene-5,6,7,8-tetrahydrofolate + NADP(+) = (6R)-5,10-methenyltetrahydrofolate + NADPH. It catalyses the reaction (6R)-5,10-methenyltetrahydrofolate + H2O = (6R)-10-formyltetrahydrofolate + H(+). It functions in the pathway one-carbon metabolism; tetrahydrofolate interconversion. In terms of biological role, catalyzes the oxidation of 5,10-methylenetetrahydrofolate to 5,10-methenyltetrahydrofolate and then the hydrolysis of 5,10-methenyltetrahydrofolate to 10-formyltetrahydrofolate. In Parasynechococcus marenigrum (strain WH8102), this protein is Bifunctional protein FolD.